Here is a 39-residue protein sequence, read N- to C-terminus: Cytochrome b559 subunit beta (39 aa).

A helical transmembrane segment spans residues 14 to 30 (WLTVHGLAVPTVSFLGS). Residue His-18 participates in heme binding.

This sequence belongs to the PsbE/PsbF family. In terms of assembly, heterodimer of an alpha subunit and a beta subunit. PSII is composed of 1 copy each of membrane proteins PsbA, PsbB, PsbC, PsbD, PsbE, PsbF, PsbH, PsbI, PsbJ, PsbK, PsbL, PsbM, PsbT, PsbX, PsbY, PsbZ, Psb30/Ycf12, at least 3 peripheral proteins of the oxygen-evolving complex and a large number of cofactors. It forms dimeric complexes. Heme b serves as cofactor.

It is found in the plastid. It localises to the chloroplast thylakoid membrane. In terms of biological role, this b-type cytochrome is tightly associated with the reaction center of photosystem II (PSII). PSII is a light-driven water:plastoquinone oxidoreductase that uses light energy to abstract electrons from H(2)O, generating O(2) and a proton gradient subsequently used for ATP formation. It consists of a core antenna complex that captures photons, and an electron transfer chain that converts photonic excitation into a charge separation. The polypeptide is Cytochrome b559 subunit beta (Cucumis sativus (Cucumber)).